We begin with the raw amino-acid sequence, 135 residues long: Protein Wnt-7c (135 aa).

2 cysteine pairs are disulfide-bonded: C3–C17 and C5–C12. A lipid anchor (O-palmitoleoyl serine; by PORCN) is attached at S9. Residues N62, N85, and N98 are each glycosylated (N-linked (GlcNAc...) asparagine). Intrachain disulfides connect C81-C112, C97-C107, and C134-C135.

This sequence belongs to the Wnt family. Palmitoleoylation is required for efficient binding to frizzled receptors. Depalmitoleoylation leads to Wnt signaling pathway inhibition.

Its subcellular location is the secreted. It localises to the extracellular space. The protein localises to the extracellular matrix. Functionally, ligand for members of the frizzled family of seven transmembrane receptors. Probable developmental protein. May be a signaling molecule which affects the development of discrete regions of tissues. Is likely to signal over only few cell diameters. The polypeptide is Protein Wnt-7c (wnt7c) (Xenopus laevis (African clawed frog)).